The following is a 979-amino-acid chain: Mast/stem cell growth factor receptor Kit (979 aa).

The N-terminal stretch at Met1–Thr24 is a signal peptide. Over Ser25–Pro527 the chain is Extracellular. Ig-like C2-type domains lie at Pro31–Lys117, Phe126–Lys210, and Val217–Phe315. 4 disulfides stabilise this stretch: Cys58–Cys98, Cys137–Cys187, Cys152–Cys184, and Cys234–Cys293. Asn146 carries N-linked (GlcNAc...) asparagine glycosylation. N-linked (GlcNAc...) asparagine glycans are attached at residues Asn296, Asn303, Asn323, Asn355, Asn370, Asn466, and Asn489. Ig-like C2-type domains are found at residues Thr324–Glu417 and Thr420–Asn514. Cys431 and Cys494 are joined by a disulfide. A helical membrane pass occupies residues Leu528–Tyr548. Over Lys549–Ala979 the chain is Cytoplasmic. Phosphotyrosine; by autocatalysis is present on residues Tyr550 and Tyr556. Residue Tyr571 participates in Mg(2+) binding. Tyr571 and Tyr573 each carry phosphotyrosine. An important for interaction with phosphotyrosine-binding proteins region spans residues Tyr571–Tyr573. Residues Leu592 to Ser939 form the Protein kinase domain. ATP contacts are provided by residues Gly599–Val606, Lys626, and Glu674–Asp680. Tyr706 is subject to Phosphotyrosine. A Phosphoserine modification is found at Ser720. A phosphotyrosine; by autocatalysis mark is found at Tyr723 and Tyr732. 2 positions are modified to phosphoserine; by PKC/PRKCA: Ser743 and Ser748. The active-site Proton acceptor is Asp794. ATP is bound at residue Arg798. Residues Asn799 and Asp812 each coordinate Mg(2+). The residue at position 823 (Ser823) is a Phosphoserine. Tyr825 carries the phosphotyrosine; by autocatalysis modification. Ser893 is modified (phosphoserine). Phosphotyrosine; by autocatalysis is present on Tyr902. Phosphotyrosine is present on Tyr938. Ser962 is subject to Phosphoserine.

Belongs to the protein kinase superfamily. Tyr protein kinase family. CSF-1/PDGF receptor subfamily. In terms of assembly, monomer in the absence of bound KITLG/SCF. Homodimer in the presence of bound KITLG/SCF, forming a heterotetramer with two KITLG/SCF molecules. Interacts (via phosphorylated tyrosine residues) with the adapter proteins GRB2 and GRB7 (via SH2 domain), and SH2B2/APS. Interacts (via C-terminus) with MPDZ (via the tenth PDZ domain). Interacts (via phosphorylated tyrosine residues) with the protein phosphatases PTPN6/SHP-1 (via SH2 domain), PTPN11/SHP-2 (via SH2 domain) and PTPRU. Interacts with DOK1 and TEC. Interacts with the protein kinase FES/FPS. Interacts with PLCG1. Interacts (via phosphorylated tyrosine residues) with PIK3R1 and PIK3 catalytic subunit. Interacts (KITLG/SCF-bound) with IL1RL1. Interacts with IL1RAP (independent of stimulation with KITLG/SCF). A mast cell-specific KITLG/SCF-induced interleukin-33 signaling complex contains IL1RL1, IL1RAP, KIT and MYD88. Post-translationally, ubiquitinated by SOCS6. KIT is rapidly ubiquitinated after autophosphorylation induced by KITLG/SCF binding, leading to internalization and degradation. In terms of processing, autophosphorylated on tyrosine residues. KITLG/SCF binding promotes autophosphorylation of isoform 1 and isoform 2. Isoform 1 shows low levels of tyrosine phosphorylation in the absence of added KITLG/SCF, while isoform 2 requires stimulation by KITLG/SCF for phosphorylation (in vitro). Phosphorylation of Tyr-573 is required for interaction with PTPN6/SHP-1. Phosphorylation of Tyr-571 is required for interaction with PTPN11/SHP-2. Phosphorylated tyrosine residues are important for interaction with specific binding partners. In terms of tissue distribution, isoform 1 and isoform 2 are detected in bone marrow cells, spermatogonia and spermatocytes, but not in round spermatids, elongating spermatids and spermatozoa. Isoform 3 is detected in round spermatids, elongating spermatids and spermatozoa, but not in spermatogonia and spermatocytes (at protein level). Isoform 1 is widely expressed and detected in fetal liver and bone marrow. Isoform 3 is detected in bone marrow cells enriched in hematopoietic stem cells.

It localises to the cell membrane. The protein localises to the cytoplasm. The enzyme catalyses L-tyrosyl-[protein] + ATP = O-phospho-L-tyrosyl-[protein] + ADP + H(+). With respect to regulation, present in an inactive conformation in the absence of bound ligand. KITLG/SCF binding leads to dimerization and activation by autophosphorylation. Functionally, tyrosine-protein kinase that acts as a cell-surface receptor for the cytokine KITLG/SCF and plays an essential role in the regulation of cell survival and proliferation, hematopoiesis, stem cell maintenance, gametogenesis, mast cell development, migration and function, and in melanogenesis. In response to KITLG/SCF binding, KIT can activate several signaling pathways. Phosphorylates PIK3R1, PLCG1, SH2B2/APS and CBL. Activates the AKT1 signaling pathway by phosphorylation of PIK3R1, the regulatory subunit of phosphatidylinositol 3-kinase. Activated KIT also transmits signals via GRB2 and activation of RAS, RAF1 and the MAP kinases MAPK1/ERK2 and/or MAPK3/ERK1. Promotes activation of STAT family members STAT1, STAT3, STAT5A and STAT5B. Activation of PLCG1 leads to the production of the cellular signaling molecules diacylglycerol and inositol 1,4,5-trisphosphate. KIT signaling is modulated by protein phosphatases, and by rapid internalization and degradation of the receptor. Activated KIT promotes phosphorylation of the protein phosphatases PTPN6/SHP-1 and PTPRU, and of the transcription factors STAT1, STAT3, STAT5A and STAT5B. Promotes phosphorylation of PIK3R1, CBL, CRK (isoform Crk-II), LYN, MAPK1/ERK2 and/or MAPK3/ERK1, PLCG1, SRC and SHC1. In Mus musculus (Mouse), this protein is Mast/stem cell growth factor receptor Kit (Kit).